A 341-amino-acid polypeptide reads, in one-letter code: NADH-ubiquinone oxidoreductase chain 2 (341 aa).

8 consecutive transmembrane segments (helical) span residues 8 to 28, 61 to 81, 95 to 117, 145 to 165, 195 to 215, 238 to 258, 266 to 286, and 320 to 340; these read IFFI…SWLG, FLTQ…MMMF, LLIL…FPGV, LNIN…ALGG, LLWL…ILMF, FFMF…GFLP, LVEM…LITL, and ILTM…IYLI.

It belongs to the complex I subunit 2 family.

Its subcellular location is the mitochondrion inner membrane. The enzyme catalyses a ubiquinone + NADH + 5 H(+)(in) = a ubiquinol + NAD(+) + 4 H(+)(out). Core subunit of the mitochondrial membrane respiratory chain NADH dehydrogenase (Complex I) that is believed to belong to the minimal assembly required for catalysis. Complex I functions in the transfer of electrons from NADH to the respiratory chain. The immediate electron acceptor for the enzyme is believed to be ubiquinone. This is NADH-ubiquinone oxidoreductase chain 2 from Aedes aegypti (Yellowfever mosquito).